Reading from the N-terminus, the 98-residue chain is Large ribosomal subunit protein uL23 (98 aa).

The protein belongs to the universal ribosomal protein uL23 family. Part of the 50S ribosomal subunit. Contacts protein L29, and trigger factor when it is bound to the ribosome.

In terms of biological role, one of the early assembly proteins it binds 23S rRNA. One of the proteins that surrounds the polypeptide exit tunnel on the outside of the ribosome. Forms the main docking site for trigger factor binding to the ribosome. The sequence is that of Large ribosomal subunit protein uL23 from Marinomonas sp. (strain MWYL1).